Here is a 365-residue protein sequence, read N- to C-terminus: Chorismate synthase (365 aa).

NADP(+) is bound by residues Arg-48 and Arg-54. FMN-binding positions include Arg-125–Ser-127, Asn-238–Ala-239, Gly-278, Lys-293–Ser-297, and Arg-319.

This sequence belongs to the chorismate synthase family. In terms of assembly, homotetramer. FMNH2 serves as cofactor.

The enzyme catalyses 5-O-(1-carboxyvinyl)-3-phosphoshikimate = chorismate + phosphate. The protein operates within metabolic intermediate biosynthesis; chorismate biosynthesis; chorismate from D-erythrose 4-phosphate and phosphoenolpyruvate: step 7/7. Its function is as follows. Catalyzes the anti-1,4-elimination of the C-3 phosphate and the C-6 proR hydrogen from 5-enolpyruvylshikimate-3-phosphate (EPSP) to yield chorismate, which is the branch point compound that serves as the starting substrate for the three terminal pathways of aromatic amino acid biosynthesis. This reaction introduces a second double bond into the aromatic ring system. This Vesicomyosocius okutanii subsp. Calyptogena okutanii (strain HA) protein is Chorismate synthase.